Reading from the N-terminus, the 163-residue chain is uncharacterized protein (163 aa).

This is an uncharacterized protein from Shigella flexneri.